The chain runs to 127 residues: UPF0251 protein Ccel_0627 (127 aa).

The protein belongs to the UPF0251 family.

The sequence is that of UPF0251 protein Ccel_0627 from Ruminiclostridium cellulolyticum (strain ATCC 35319 / DSM 5812 / JCM 6584 / H10) (Clostridium cellulolyticum).